A 169-amino-acid chain; its full sequence is Phosphopantetheine adenylyltransferase (169 aa).

Substrate is bound at residue serine 10. Residues 10–11 (SF) and histidine 18 contribute to the ATP site. The substrate site is built by lysine 42, threonine 79, and arginine 93. ATP contacts are provided by residues 94-96 (GLR), glutamate 104, and 129-135 (VRPITAT).

Belongs to the bacterial CoaD family. In terms of assembly, homohexamer. Mg(2+) serves as cofactor.

The protein localises to the cytoplasm. The catalysed reaction is (R)-4'-phosphopantetheine + ATP + H(+) = 3'-dephospho-CoA + diphosphate. Its pathway is cofactor biosynthesis; coenzyme A biosynthesis; CoA from (R)-pantothenate: step 4/5. In terms of biological role, reversibly transfers an adenylyl group from ATP to 4'-phosphopantetheine, yielding dephospho-CoA (dPCoA) and pyrophosphate. This is Phosphopantetheine adenylyltransferase from Rhodopseudomonas palustris (strain ATCC BAA-98 / CGA009).